Reading from the N-terminus, the 224-residue chain is PKHD-type hydroxylase HNE_1625 (224 aa).

In terms of domain architecture, Fe2OG dioxygenase spans 77 to 175; that stretch reads KFAPPLISCS…RFVFVGWIQS (99 aa). Fe cation contacts are provided by histidine 95, aspartate 97, and histidine 156. Arginine 166 is a 2-oxoglutarate binding site.

Fe(2+) serves as cofactor. The cofactor is L-ascorbate.

This chain is PKHD-type hydroxylase HNE_1625, found in Hyphomonas neptunium (strain ATCC 15444).